We begin with the raw amino-acid sequence, 319 residues long: tRNA-modifying protein YgfZ (319 aa).

2 residues coordinate folate: Trp-27 and Trp-189.

It belongs to the tRNA-modifying YgfZ family.

It localises to the cytoplasm. In terms of biological role, folate-binding protein involved in regulating the level of ATP-DnaA and in the modification of some tRNAs. It is probably a key factor in regulatory networks that act via tRNA modification, such as initiation of chromosomal replication. The chain is tRNA-modifying protein YgfZ from Buchnera aphidicola subsp. Schizaphis graminum (strain Sg).